Reading from the N-terminus, the 525-residue chain is Vesicular inhibitory amino acid transporter (525 aa).

At Met-1 to Met-132 the chain is on the cytoplasmic side. A helical membrane pass occupies residues Phe-133–Ile-153. Residues Phe-154–Arg-204 are Lumenal, vesicle-facing. Tyr-186 carries the 3'-nitrotyrosine modification. A helical membrane pass occupies residues Val-205–Ser-225. At Gly-226–Lys-265 the chain is on the cytoplasmic side. The helical transmembrane segment at Phe-266–Leu-286 threads the bilayer. Residues Ser-287–Lys-305 lie on the Lumenal, vesicle side of the membrane. The chain crosses the membrane as a helical span at residues Phe-306–Leu-326. The Cytoplasmic segment spans residues Glu-327 to Asn-341. A helical transmembrane segment spans residues Trp-342–Trp-362. At Ala-363–Asn-383 the chain is on the lumenal, vesicle side. Residues Leu-384–Val-404 traverse the membrane as a helical segment. At Leu-405–Ala-438 the chain is on the cytoplasmic side. A helical transmembrane segment spans residues Leu-439–Leu-459. Residues Thr-460 to Gly-461 are Lumenal, vesicle-facing. Residues Ser-462–Trp-482 form a helical membrane-spanning segment. Residues Arg-483 to Gln-489 lie on the Cytoplasmic side of the membrane. The helical transmembrane segment at Val-490–His-510 threads the bilayer. At Ser-511–Asp-525 the chain is on the lumenal, vesicle side.

This sequence belongs to the amino acid/polyamine transporter 2 family. In terms of tissue distribution, brain and retina. Localized in horizontal cell tips at both rod and cone terminals.

The protein resides in the cytoplasmic vesicle membrane. It localises to the presynapse. The catalysed reaction is 4-aminobutanoate(out) + n H(+)(in) = 4-aminobutanoate(in) + n H(+)(out). It carries out the reaction glycine(out) + n H(+)(in) = glycine(in) + n H(+)(out). It catalyses the reaction beta-alanine(out) + n H(+)(in) = beta-alanine(in) + n H(+)(out). With respect to regulation, chloride ions activate 4-aminobutanoate/H(+) transport. Functionally, antiporter that exchanges vesicular protons for cytosolic 4-aminobutanoate or to a lesser extend glycine, thus allowing their secretion from nerve terminals. The transport is equally dependent on the chemical and electrical components of the proton gradient. May also transport beta-alanine. Acidification of GABAergic synaptic vesicles is a prerequisite for 4-aminobutanoate uptake. In Mus musculus (Mouse), this protein is Vesicular inhibitory amino acid transporter.